The following is a 681-amino-acid chain: Type VI secretion system spike protein VgrG1 (681 aa).

The segment at 621-640 is disordered; the sequence is NSGGSPSSGSGWGGKSPVDP.

Belongs to the VgrG protein family.

Its subcellular location is the secreted. It carries out the reaction L-arginyl-[protein] + NAD(+) = N(omega)-(ADP-D-ribosyl)-L-arginyl-[protein] + nicotinamide + H(+). Functionally, part of the type VI secretion system specialized secretion system, which delivers several virulence factors in both prokaryotic and eukaryotic cells during infection. Acts directly as an secreted effector with an actin ADP-ribosyltransferase activity that disrupts the host actin cytoskeleton, leading to a decrease in host cell viability and an increase in apoptosis. The polypeptide is Type VI secretion system spike protein VgrG1 (vgrG1) (Aeromonas hydrophila).